An 82-amino-acid chain; its full sequence is Beta-defensin 119 (82 aa).

The N-terminal stretch at 1-19 is a signal peptide; the sequence is MKFFLFFVILLAMEPVISG. Disulfide bonds link Cys-26–Cys-53, Cys-33–Cys-47, and Cys-37–Cys-54.

It belongs to the beta-defensin family.

The protein localises to the secreted. In terms of biological role, has antibacterial activity. The sequence is that of Beta-defensin 119 (DEFB119) from Canis lupus familiaris (Dog).